The chain runs to 557 residues: Nucleoprotein (557 aa).

Positions 54–235 (MRKDKRSDDD…ITKEESANNI (182 aa)) are binding site for the cap structure m7GTP. Mn(2+) contacts are provided by D379 and E381. Residues E389, C496, H499, and C518 each contribute to the Zn(2+) site. D522 serves as a coordination point for Mn(2+).

The protein belongs to the arenaviridae nucleocapsid protein family. In terms of assembly, homomultimerizes to form the nucleocapsid. Binds to viral genomic RNA. Interacts with glycoprotein G2. Interacts with protein Z; this interaction probably directs the encapsidated genome to budding sites. Interacts with protein L; this interaction does not interfere with Z-L interaction. Interacts with host IKBKE (via Protein kinase domain); the interaction inhibits IKBKE kinase activity.

The protein localises to the virion. The protein resides in the host cytoplasm. Its function is as follows. Encapsidates the genome, protecting it from nucleases. The encapsidated genomic RNA is termed the nucleocapsid (NC). Serves as template for viral transcription and replication. The increased presence of protein N in host cell does not seem to trigger the switch from transcription to replication as observed in other negative strain RNA viruses. Through the interaction with host IKBKE, strongly inhibits the phosphorylation and nuclear translocation of host IRF3, a protein involved in interferon activation pathway, leading to the inhibition of interferon-beta and IRF3-dependent promoters activation. Also encodes a functional 3'-5' exoribonuclease that degrades preferentially dsRNA substrates and thereby participates in the suppression of interferon induction. The protein is Nucleoprotein of Calomys callosus (Large vesper mouse).